A 400-amino-acid chain; its full sequence is Acyl-CoA dehydrogenase FadE26 (400 aa).

Residues 127 to 130 (IGYS), Thr-136, and Ser-162 each bind FAD. Glu-247 (proton acceptor) is an active-site residue. 380–382 (TNE) contributes to the FAD binding site.

Belongs to the acyl-CoA dehydrogenase family. As to quaternary structure, heterotetramer (dimer of heterodimers) composed of FadE26 and FadE27. FAD is required as a cofactor.

It carries out the reaction (25S)-3-oxocholest-4-en-26-oyl-CoA + A = 3-oxo-cholest-4,24-dien-26-oyl-CoA + AH2. The protein operates within steroid metabolism; cholesterol degradation. With respect to regulation, uncompetitively inhibited by high concentration of 3-OCS-CoA. In terms of biological role, involved in the first cycle of side chain dehydrogenation in the beta-oxidation of cholesterol catabolism. It contributes partly to the virulence by increasing the efficiency of beta-oxidation. Catalyzes the dehydrogenation of acyl-CoA ester side chains of (25S)-3-oxo-cholest-4-en-26-oyl-CoA (3-OCS-CoA) to yield (24E)-3-oxo-cholest-4,24-dien-26-oyl-CoA. Also able to dehydrogenate steroyl-CoA such as 3-oxo-chol-4-en-24-oyl-CoA (3-OCO-CoA) as well as 3-oxo-4-pregnene-20-carboxyl-CoA (3-OPC-CoA). It dehydrogenates only (25S)-OCS-CoA diastereomer. This Mycobacterium tuberculosis (strain ATCC 25618 / H37Rv) protein is Acyl-CoA dehydrogenase FadE26 (fadE26).